A 475-amino-acid chain; its full sequence is 3-isopropylmalate dehydratase large subunit (475 aa).

3 residues coordinate [4Fe-4S] cluster: C349, C409, and C412.

The protein belongs to the aconitase/IPM isomerase family. LeuC type 1 subfamily. Heterodimer of LeuC and LeuD. It depends on [4Fe-4S] cluster as a cofactor.

It catalyses the reaction (2R,3S)-3-isopropylmalate = (2S)-2-isopropylmalate. Its pathway is amino-acid biosynthesis; L-leucine biosynthesis; L-leucine from 3-methyl-2-oxobutanoate: step 2/4. Catalyzes the isomerization between 2-isopropylmalate and 3-isopropylmalate, via the formation of 2-isopropylmaleate. This chain is 3-isopropylmalate dehydratase large subunit, found in Cereibacter sphaeroides (strain KD131 / KCTC 12085) (Rhodobacter sphaeroides).